The primary structure comprises 226 residues: Orotidine 5'-phosphate decarboxylase (226 aa).

Residues Asp8, Lys30, Asp58–Thr67, Thr117, Arg177, Gln186, Gly206, and Arg207 contribute to the substrate site. The active-site Proton donor is the Lys60.

Belongs to the OMP decarboxylase family. Type 1 subfamily. In terms of assembly, homodimer.

The catalysed reaction is orotidine 5'-phosphate + H(+) = UMP + CO2. It functions in the pathway pyrimidine metabolism; UMP biosynthesis via de novo pathway; UMP from orotate: step 2/2. Its function is as follows. Catalyzes the decarboxylation of orotidine 5'-monophosphate (OMP) to uridine 5'-monophosphate (UMP). The polypeptide is Orotidine 5'-phosphate decarboxylase (Campylobacter concisus (strain 13826)).